A 501-amino-acid polypeptide reads, in one-letter code: Aspartate--tRNA ligase, cytoplasmic (501 aa).

Residue Thr52 is modified to Phosphothreonine. The residue at position 74 (Lys74) is an N6-acetyllysine. Glu229 provides a ligand contact to L-aspartate. Ser249 bears the Phosphoserine mark. An aspartate region spans residues 251-254; that stretch reads QLYK. Arg273 is a binding site for L-aspartate. ATP-binding positions include 273-275 and 281-283; these read RAE and RHL. Residue Lys374 is modified to N6-acetyllysine. The binding site for the 3'-end of tRNA stretch occupies residues 411-415; that stretch reads KQSNS. Glu424 provides a ligand contact to ATP. 2 residues coordinate L-aspartate: Ser427 and Arg431. Position 472–475 (472–475) interacts with ATP; it reads GLER. The residue at position 500 (Thr500) is a Phosphothreonine; by PKA.

It belongs to the class-II aminoacyl-tRNA synthetase family. Type 2 subfamily. In terms of assembly, homodimer. Part of a multisubunit complex that groups tRNA ligases for Arg (RARS1), Asp (DARS1), Gln (QARS1), Ile (IARS1), Leu (LARS1), Lys (KARS1), Met (MARS1) the bifunctional ligase for Glu and Pro (EPRS1) and the auxiliary subunits AIMP1/p43, AIMP2/p38 and EEF1E1/p18.

The protein resides in the cytoplasm. The catalysed reaction is tRNA(Asp) + L-aspartate + ATP = L-aspartyl-tRNA(Asp) + AMP + diphosphate. Its function is as follows. Catalyzes the specific attachment of an amino acid to its cognate tRNA in a 2 step reaction: the amino acid (AA) is first activated by ATP to form AA-AMP and then transferred to the acceptor end of the tRNA. In Bos taurus (Bovine), this protein is Aspartate--tRNA ligase, cytoplasmic (DARS1).